Here is a 762-residue protein sequence, read N- to C-terminus: 5-methyltetrahydropteroyltriglutamate--homocysteine methyltransferase (762 aa).

Residues 18–21 and Lys-112 contribute to the 5-methyltetrahydropteroyltri-L-glutamate site; that span reads REWK. Residues 435–437 and Glu-488 contribute to the L-homocysteine site; that span reads IGS. Residues 435 to 437 and Glu-488 contribute to the L-methionine site; that span reads IGS. 5-methyltetrahydropteroyltri-L-glutamate-binding positions include 519-520 and Trp-565; that span reads RC. Position 603 (Asp-603) interacts with L-homocysteine. Position 603 (Asp-603) interacts with L-methionine. Position 609 (Glu-609) interacts with 5-methyltetrahydropteroyltri-L-glutamate. Residues His-645, Cys-647, and Glu-669 each contribute to the Zn(2+) site. Residue His-698 is the Proton donor of the active site. Cys-730 provides a ligand contact to Zn(2+).

Belongs to the vitamin-B12 independent methionine synthase family. Zn(2+) serves as cofactor.

It carries out the reaction 5-methyltetrahydropteroyltri-L-glutamate + L-homocysteine = tetrahydropteroyltri-L-glutamate + L-methionine. It participates in amino-acid biosynthesis; L-methionine biosynthesis via de novo pathway; L-methionine from L-homocysteine (MetE route): step 1/1. Functionally, catalyzes the transfer of a methyl group from 5-methyltetrahydrofolate to homocysteine resulting in methionine formation. In Bacillus velezensis (strain DSM 23117 / BGSC 10A6 / LMG 26770 / FZB42) (Bacillus amyloliquefaciens subsp. plantarum), this protein is 5-methyltetrahydropteroyltriglutamate--homocysteine methyltransferase.